Consider the following 283-residue polypeptide: Probable cytochrome c oxidase subunit 3 (283 aa).

Transmembrane regions (helical) follow at residues 26-46 (PWPVLTSFALLLLVIGGVSFM), 51-71 (FNIYILSAGIISVGYCLYSWW), 94-114 (IGMALFILTEIVFFGVFFASF), 179-199 (CVTALALTILLGIFFTTMQAY), 217-237 (FYLATGFHGAHVIIGTIFLII), and 261-281 (AWYWHFVDVVWLFLFTFVYIF).

Belongs to the cytochrome c oxidase subunit 3 family.

It is found in the cell membrane. It carries out the reaction 4 Fe(II)-[cytochrome c] + O2 + 8 H(+)(in) = 4 Fe(III)-[cytochrome c] + 2 H2O + 4 H(+)(out). The sequence is that of Probable cytochrome c oxidase subunit 3 (ctaE) from Rickettsia conorii (strain ATCC VR-613 / Malish 7).